A 123-amino-acid polypeptide reads, in one-letter code: Succinate dehydrogenase assembly factor 3, mitochondrial (123 aa).

The N-terminal 31 residues, 1–31 (MANPAHISAVRTLYKKILVLHRFLPIDLRAL), are a transit peptide targeting the mitochondrion.

This sequence belongs to the complex I LYR family. SDHAF3 subfamily. As to quaternary structure, interacts with sdhb within an sdha-sdhb subcomplex.

It is found in the mitochondrion matrix. Plays an essential role in the assembly of succinate dehydrogenase (SDH), an enzyme complex (also referred to as respiratory complex II) that is a component of both the tricarboxylic acid (TCA) cycle and the mitochondrial electron transport chain, and which couples the oxidation of succinate to fumarate with the reduction of ubiquinone (coenzyme Q) to ubiquinol. Promotes maturation of the iron-sulfur protein subunit sdhb of the SDH catalytic dimer, protecting it from the deleterious effects of oxidants. May act together with SDHAF1. The chain is Succinate dehydrogenase assembly factor 3, mitochondrial from Danio rerio (Zebrafish).